We begin with the raw amino-acid sequence, 413 residues long: S-adenosylmethionine synthase (413 aa).

H15 is a binding site for ATP. D17 is a Mg(2+) binding site. Residue E43 coordinates K(+). Residues E56 and Q100 each coordinate L-methionine. The flexible loop stretch occupies residues 100–110 (QSPDISQGVNE). ATP contacts are provided by residues 171-173 (DGK), 248-249 (KF), D257, 263-264 (RK), A280, and K284. D257 provides a ligand contact to L-methionine. K288 is an L-methionine binding site.

It belongs to the AdoMet synthase family. In terms of assembly, homotetramer; dimer of dimers. Mg(2+) serves as cofactor. Requires K(+) as cofactor.

It localises to the cytoplasm. The enzyme catalyses L-methionine + ATP + H2O = S-adenosyl-L-methionine + phosphate + diphosphate. The protein operates within amino-acid biosynthesis; S-adenosyl-L-methionine biosynthesis; S-adenosyl-L-methionine from L-methionine: step 1/1. Functionally, catalyzes the formation of S-adenosylmethionine (AdoMet) from methionine and ATP. The overall synthetic reaction is composed of two sequential steps, AdoMet formation and the subsequent tripolyphosphate hydrolysis which occurs prior to release of AdoMet from the enzyme. This is S-adenosylmethionine synthase from Prochlorococcus marinus (strain MIT 9215).